Here is a 528-residue protein sequence, read N- to C-terminus: Keratin, type II cytoskeletal 78 (528 aa).

The segment at 1–104 (MSLSPCRARR…DPQFQVVRTQ (104 aa)) is head. Residues 23-45 (VGRGRTGFSSRSLSSFGGCRGGS) form a disordered region. Residues 24–39 (GRGRTGFSSRSLSSFG) are compositionally biased toward low complexity. The interval 105 to 140 (ETQQIRVLNNQFASFIDKVRFLEQQNKVLETKWHLL) is coil 1A. The region spanning 105–418 (ETQQIRVLNN…RLLEGEECRM (314 aa)) is the IF rod domain. The tract at residues 141–159 (QQQGLSDRPQGLESFFEAY) is linker 1. Residues 160–252 (LVRLRTQLEE…LYEEELGQLQ (93 aa)) are coil 1B. The interval 253–275 (TQASDMSVVLSMDNNRCLDFRDL) is linker 12. Positions 276-415 (IAEVRARYEE…TYRRLLEGEE (140 aa)) are coil 2. A tail region spans residues 416 to 528 (CRMSGECASQ…ESSLKTSVTY (113 aa)).

This sequence belongs to the intermediate filament family. In terms of assembly, heterotetramer of two type I and two type II keratins.

The protein is Keratin, type II cytoskeletal 78 (KRT78) of Bos taurus (Bovine).